Here is a 159-residue protein sequence, read N- to C-terminus: Putative viral CXC chemokine 2 (159 aa).

Cystine bridges form between Cys50–Cys77 and Cys52–Cys93.

It belongs to the intercrine alpha (chemokine CxC) family.

The chain is Putative viral CXC chemokine 2 (UL147) from Human cytomegalovirus (strain Merlin) (HHV-5).